The sequence spans 41 residues: Photosystem II reaction center protein L (41 aa).

The helical transmembrane segment at 20–40 threads the bilayer; the sequence is SLYLGLLLVFVVGLLFSSYFL.

It belongs to the PsbL family. PSII is composed of 1 copy each of membrane proteins PsbA, PsbB, PsbC, PsbD, PsbE, PsbF, PsbH, PsbI, PsbJ, PsbK, PsbL, PsbM, PsbT, PsbX, PsbY, PsbZ, Psb30/Ycf12, peripheral proteins PsbO, CyanoQ (PsbQ), PsbU, PsbV and a large number of cofactors. It forms dimeric complexes.

It localises to the cellular thylakoid membrane. One of the components of the core complex of photosystem II (PSII). PSII is a light-driven water:plastoquinone oxidoreductase that uses light energy to abstract electrons from H(2)O, generating O(2) and a proton gradient subsequently used for ATP formation. It consists of a core antenna complex that captures photons, and an electron transfer chain that converts photonic excitation into a charge separation. This subunit is found at the monomer-monomer interface and is required for correct PSII assembly and/or dimerization. This chain is Photosystem II reaction center protein L, found in Synechococcus sp. (strain JA-2-3B'a(2-13)) (Cyanobacteria bacterium Yellowstone B-Prime).